The sequence spans 181 residues: Translation initiation factor IF-3 (181 aa).

It belongs to the IF-3 family. As to quaternary structure, monomer.

Its subcellular location is the cytoplasm. IF-3 binds to the 30S ribosomal subunit and shifts the equilibrium between 70S ribosomes and their 50S and 30S subunits in favor of the free subunits, thus enhancing the availability of 30S subunits on which protein synthesis initiation begins. This Mycoplasma mycoides subsp. mycoides SC (strain CCUG 32753 / NCTC 10114 / PG1) protein is Translation initiation factor IF-3.